We begin with the raw amino-acid sequence, 216 residues long: Octanoyltransferase (216 aa).

Positions 31-205 constitute a BPL/LPL catalytic domain; the sequence is STTRDEVWLV…ELVTLLDYEQ (175 aa). Residues 70–77, 137–139, and 150–152 contribute to the substrate site; these read RGGQVTYH, SLG, and GLA. The Acyl-thioester intermediate role is filled by Cys-168.

It belongs to the LipB family.

The protein resides in the cytoplasm. The catalysed reaction is octanoyl-[ACP] + L-lysyl-[protein] = N(6)-octanoyl-L-lysyl-[protein] + holo-[ACP] + H(+). Its pathway is protein modification; protein lipoylation via endogenous pathway; protein N(6)-(lipoyl)lysine from octanoyl-[acyl-carrier-protein]: step 1/2. Its function is as follows. Catalyzes the transfer of endogenously produced octanoic acid from octanoyl-acyl-carrier-protein onto the lipoyl domains of lipoate-dependent enzymes. Lipoyl-ACP can also act as a substrate although octanoyl-ACP is likely to be the physiological substrate. The protein is Octanoyltransferase of Vibrio cholerae serotype O1 (strain ATCC 39315 / El Tor Inaba N16961).